A 344-amino-acid chain; its full sequence is Probable dual-specificity RNA methyltransferase RlmN (344 aa).

Glu90 (proton acceptor) is an active-site residue. A Radical SAM core domain is found at 96–326; sequence YKYGNAICIS…VTIRRELGSS (231 aa). Cys103 and Cys331 are oxidised to a cystine. Cys110, Cys114, and Cys117 together coordinate [4Fe-4S] cluster. S-adenosyl-L-methionine contacts are provided by residues 157 to 158, Ser189, 212 to 214, and Asn288; these read GE and SLH. The active-site S-methylcysteine intermediate is Cys331.

The protein belongs to the radical SAM superfamily. RlmN family. It depends on [4Fe-4S] cluster as a cofactor.

Its subcellular location is the cytoplasm. It carries out the reaction adenosine(2503) in 23S rRNA + 2 reduced [2Fe-2S]-[ferredoxin] + 2 S-adenosyl-L-methionine = 2-methyladenosine(2503) in 23S rRNA + 5'-deoxyadenosine + L-methionine + 2 oxidized [2Fe-2S]-[ferredoxin] + S-adenosyl-L-homocysteine. It catalyses the reaction adenosine(37) in tRNA + 2 reduced [2Fe-2S]-[ferredoxin] + 2 S-adenosyl-L-methionine = 2-methyladenosine(37) in tRNA + 5'-deoxyadenosine + L-methionine + 2 oxidized [2Fe-2S]-[ferredoxin] + S-adenosyl-L-homocysteine. Functionally, specifically methylates position 2 of adenine 2503 in 23S rRNA and position 2 of adenine 37 in tRNAs. This is Probable dual-specificity RNA methyltransferase RlmN from Caldicellulosiruptor saccharolyticus (strain ATCC 43494 / DSM 8903 / Tp8T 6331).